The primary structure comprises 538 residues: Syncytin-2 (538 aa).

The N-terminal stretch at 1–15 (MGLLLLLLILTPLLA) is a signal peptide. The Extracellular segment spans residues 16–478 (AYCHPDFRLL…GWLNWEGTWK (463 aa)). Residues 43 to 46 (CWLC) carry the CXXC motif. Disulfide bonds link Cys-43–Cys-46, Cys-43–Cys-439, and Cys-431–Cys-438. Asn-146, Asn-177, Asn-220, Asn-241, Asn-247, Asn-312, and Asn-332 each carry an N-linked (GlcNAc...) asparagine glycan. Residues 354–374 (LIPLLVGLGIVGSAGTGIAGI) form a fusion peptide region. Residues 414 to 430 (LQNRRGLDMLTAAQGGI) carry the CKS-17 motif. The CX6CC signature appears at 431–439 (CLALDEKCC). N-linked (GlcNAc...) asparagine glycosylation occurs at Asn-443. Residues 479-499 (WFSWVLPFTGPLVSLLLLLLF) form a helical membrane-spanning segment. The Cytoplasmic portion of the chain corresponds to 500 to 538 (GPCLLNLITQFVSSRLQATKLQMKLNKRVHPRNSQESPF).

This sequence belongs to the gamma type-C retroviral envelope protein family. HERV class-I FRD env subfamily. As to quaternary structure, the surface and transmembrane proteins form a heterodimer. They are attached by non-covalent interactions or by a labile interchain disulfide bond. In terms of processing, specific enzymatic cleavages in vivo yield the mature SU and TM proteins. Post-translationally, the CXXC motif is highly conserved across a broad range of retroviral envelope proteins. It is thought to participate in the formation of a labile disulfide bond possibly with the CX6CC motif present in the transmembrane protein.

It is found in the virion. Its subcellular location is the cell membrane. This endogenous retroviral envelope protein has retained its original fusogenic properties and participates in trophoblast fusion and the formation of a syncytium during placenta morphogenesis. The interaction with MFSD2A is apparently important for this process. Functionally, endogenous envelope proteins may have kept, lost or modified their original function during evolution but this one can still make pseudotypes with MLV, HIV-1 or SIV-1 virions and confer infectivity. Retroviral envelope proteins mediate receptor recognition and membrane fusion during early infection. The surface protein mediates receptor recognition, while the transmembrane protein anchors the envelope heterodimer to the viral membrane through one transmembrane domain. The other hydrophobic domain, called fusion peptide, mediates fusion of the viral membrane with the target cell membrane. This is Syncytin-2 (ERVFRD-1) from Callithrix jacchus (White-tufted-ear marmoset).